The primary structure comprises 57 residues: Large ribosomal subunit protein bL32 (57 aa).

The protein belongs to the bacterial ribosomal protein bL32 family.

This is Large ribosomal subunit protein bL32 from Ureaplasma parvum serovar 3 (strain ATCC 27815 / 27 / NCTC 11736).